The primary structure comprises 38 residues: Potassium channel toxin alpha-KTx 3.12 (38 aa).

Disulfide bonds link C8–C28, C14–C33, and C18–C35. Position 38 is a lysine amide (K38).

This sequence belongs to the short scorpion toxin superfamily. Potassium channel inhibitor family. Alpha-KTx 03 subfamily. Expressed by the venom gland.

It localises to the secreted. Functionally, potent inhibitor of voltage-dependent potassium channels, with a preference for Kv1.3/KCNA3 versus Kv1.2/KCNA2. In Androctonus amoreuxi (African fattail scorpion), this protein is Potassium channel toxin alpha-KTx 3.12.